The chain runs to 219 residues: Probable GTP-binding protein EngB (219 aa).

The 175-residue stretch at 31–205 (VGVEIAFAGR…LSILNEWCHP (175 aa)) folds into the EngB-type G domain. Residues 39–46 (GRSNAGKS), 66–70 (GRTQL), 84–87 (DLPG), 151–154 (TKSD), and 184–186 (FSA) each bind GTP. The Mg(2+) site is built by Ser46 and Thr68.

It belongs to the TRAFAC class TrmE-Era-EngA-EngB-Septin-like GTPase superfamily. EngB GTPase family. The cofactor is Mg(2+).

Functionally, necessary for normal cell division and for the maintenance of normal septation. The protein is Probable GTP-binding protein EngB of Shewanella sp. (strain ANA-3).